A 391-amino-acid chain; its full sequence is 23S rRNA (uracil(747)-C(5))-methyltransferase RlmC (391 aa).

Cysteine 5, cysteine 13, cysteine 16, and cysteine 95 together coordinate [4Fe-4S] cluster. S-adenosyl-L-methionine-binding residues include glutamine 220, phenylalanine 249, glutamate 276, and asparagine 322. The active-site Nucleophile is cysteine 349.

The protein belongs to the class I-like SAM-binding methyltransferase superfamily. RNA M5U methyltransferase family. RlmC subfamily.

The enzyme catalyses uridine(747) in 23S rRNA + S-adenosyl-L-methionine = 5-methyluridine(747) in 23S rRNA + S-adenosyl-L-homocysteine + H(+). Functionally, catalyzes the formation of 5-methyl-uridine at position 747 (m5U747) in 23S rRNA. This is 23S rRNA (uracil(747)-C(5))-methyltransferase RlmC from Actinobacillus pleuropneumoniae serotype 3 (strain JL03).